A 365-amino-acid polypeptide reads, in one-letter code: Red-sensitive opsin (365 aa).

The Extracellular portion of the chain corresponds to 1–51 (MASQLNEAIFAARRRNDDDDTTRSSVFTYTNSNNTRGPFEGPNYHIAPRWV). Residue Asn-33 is glycosylated (N-linked (GlcNAc...) asparagine). A helical transmembrane segment spans residues 52–76 (YNLTSIWMIFVVFASVFTNGLVIVA). Residues 77 to 88 (TLKFKKLRHPLN) are Cytoplasmic-facing. A helical membrane pass occupies residues 89-113 (WILVNMAIADLGETVIASTISVFNQ). Topologically, residues 114–128 (IFGYFILGHPMCVLE) are extracellular. Cys-125 and Cys-202 are oxidised to a cystine. Residues 129 to 148 (GFTVSTCGITALWSLTVIAW) traverse the membrane as a helical segment. The Cytoplasmic segment spans residues 149-167 (ERWFVVCKPFGNIKFDEKL). A helical transmembrane segment spans residues 168-191 (AATGIIFSWVWSAGWCAPPMFGWS). Topologically, residues 192-217 (RFWPHGLKTSCGPDVFSGSSDPGVQS) are extracellular. A helical transmembrane segment spans residues 218–245 (YMLVLMITCCIIPLAIIILCYLHVWWTI). The Cytoplasmic segment spans residues 246-267 (RQVAQQQKESESTQKAEREVSR). The helical transmembrane segment at 268–291 (MVVVMIVAYIFCWGPYTFFACFAA) threads the bilayer. Residues 292 to 299 (FSPGYSFH) lie on the Extracellular side of the membrane. The chain crosses the membrane as a helical span at residues 300–324 (PLAAALPAYFAKSATIYNPIIYVFM). The residue at position 311 (Lys-311) is an N6-(retinylidene)lysine. The Cytoplasmic portion of the chain corresponds to 325-365 (NRQFRNCIYQMFGKKVDDGSEVSSTSRTEVSSVSNSSVSPA). The segment at 342–365 (DGSEVSSTSRTEVSSVSNSSVSPA) is disordered. Over residues 345–365 (EVSSTSRTEVSSVSNSSVSPA) the composition is skewed to low complexity.

The protein belongs to the G-protein coupled receptor 1 family. Opsin subfamily. In terms of processing, phosphorylated on some or all of the serine and threonine residues present in the C-terminal region.

The protein localises to the membrane. In terms of biological role, visual pigments are the light-absorbing molecules that mediate vision. They consist of an apoprotein, opsin, covalently linked to cis-retinal. This is Red-sensitive opsin (opn1lw1) from Xenopus laevis (African clawed frog).